The sequence spans 630 residues: 1-deoxy-D-xylulose-5-phosphate synthase (630 aa).

Residues His75 and 116–118 (GHS) contribute to the thiamine diphosphate site. Residue Asp147 participates in Mg(2+) binding. Thiamine diphosphate-binding positions include 148-149 (GA), Asn176, Tyr287, and Glu367. Asn176 lines the Mg(2+) pocket.

It belongs to the transketolase family. DXPS subfamily. In terms of assembly, homodimer. It depends on Mg(2+) as a cofactor. Thiamine diphosphate serves as cofactor.

It carries out the reaction D-glyceraldehyde 3-phosphate + pyruvate + H(+) = 1-deoxy-D-xylulose 5-phosphate + CO2. The protein operates within metabolic intermediate biosynthesis; 1-deoxy-D-xylulose 5-phosphate biosynthesis; 1-deoxy-D-xylulose 5-phosphate from D-glyceraldehyde 3-phosphate and pyruvate: step 1/1. Catalyzes the acyloin condensation reaction between C atoms 2 and 3 of pyruvate and glyceraldehyde 3-phosphate to yield 1-deoxy-D-xylulose-5-phosphate (DXP). The sequence is that of 1-deoxy-D-xylulose-5-phosphate synthase from Treponema pallidum (strain Nichols).